Reading from the N-terminus, the 301-residue chain is Probable aspartoacylase (301 aa).

Zn(2+)-binding residues include His-13 and Glu-16. Substrate is bound by residues Arg-54 and 61–62 (NR). His-105 contacts Zn(2+). Substrate contacts are provided by Glu-163 and Tyr-273.

Belongs to the AspA/AstE family. Aspartoacylase subfamily. Zn(2+) is required as a cofactor.

The catalysed reaction is an N-acyl-L-aspartate + H2O = a carboxylate + L-aspartate. This Prochlorococcus marinus (strain AS9601) protein is Probable aspartoacylase.